The chain runs to 931 residues: MKKNFEVFDFKEEDELAESAAGKLLEKFTNPSPCNSPVLQRQRIQSFCNEKRVEEEEMEGPSCAEPATAVESDDHQCEDDSTLVTEAKESRTILTFGLETTDHLEETDAEHVNQGLMLGLKTEDLAKETDIDHDNHGLMFGLNSEDDIEETDVDHRVESFSCQLGGNSFYAETSSYSQRQLNSPFSDSSSSEEQIDMMSAIDESLSDRSALSEASDSEDDEEDWMTEHCFNDEEKIDLSTAVIMTSEYVILKDMHCAASLVIFSCNGIKIKSFLANNEEVPFSCEFGVEDIVSIQYNWYQNVGLIILRIRVLLKDENCHEDMEELKIAVKEHNWPNKQQKINSLHVKYPAVWNTDLEDDVEVSGYNLNQQKRYFPSFDEPFEDVVYPKGDPDAVSICKRDVELLQPETFVNDTIIDFYINYLKNQIQTEEKHRFHFFNSFFFRKLADLDKDPSSIADGKAAFLRVRKWTRKVDMFGKDYIFVPVNYNLHWSLIVICHPGEVANRTDLDLDDSKKVPCILHMDSIKGSHAGLKNLVQTYLCEEWKERHKETSDDISSRFMNLRFVSLELPQQENSFDCGLFLLHYLELFLAEAPLNFSPFKIYNASNFLYLNWFPPAEASLKRTLIQKLIFELLENRSREVSNEQNQSCESPVAVNDDMGIEVLSERCSPLIDCNGDMTQTQDDQGIEMTLLERSSMRHIQAANDSGMVLRDLFDSGSNNTGSLLEQLQQPFEDPSSFYHLSNDSSAREQVDMETGEQFMCLNAGEGNFQCITETTSPRASNSFSSWNLGIPLVQKEDETDLLSETSNSSNDSIGIIEDNPIENTHEEEIDESPPRETVSLKSATVGSNTADHTTENEEPVSTHIELVVPSSQNDRDEEKPLEHDLEIGDKTSEDVGDDCDQKEPMEEEDEKRAAKRPRLSSPTGEAEEMEK.

Residues 204 to 224 (SLSDRSALSEASDSEDDEEDW) form a disordered region. A compositionally biased stretch (acidic residues) spans 215–224 (SDSEDDEEDW). Residues His489, Asp522, and Cys577 contribute to the active site. The tract at residues 825-931 (HEEEIDESPP…PTGEAEEMEK (107 aa)) is disordered. Polar residues predominate over residues 839–851 (SLKSATVGSNTAD). The segment covering 873 to 904 (NDRDEEKPLEHDLEIGDKTSEDVGDDCDQKEP) has biased composition (basic and acidic residues).

It belongs to the peptidase C48 family.

Protease that catalyzes two essential functions in the SUMO pathway: processing of full-length SUMOs to their mature forms and deconjugation of SUMO from targeted proteins. The sequence is that of Probable ubiquitin-like-specific protease 2B (ULP2B) from Arabidopsis thaliana (Mouse-ear cress).